The sequence spans 110 residues: uncharacterized protein (110 aa).

The first 16 residues, 1 to 16 (MKKILLIASMTAGLTA), serve as a signal peptide directing secretion. A lipid anchor (N-palmitoyl cysteine) is attached at cysteine 17. Cysteine 17 carries S-diacylglycerol cysteine lipidation.

It is found in the cell membrane. This is an uncharacterized protein from Salmonella typhimurium (strain LT2 / SGSC1412 / ATCC 700720).